Here is a 1380-residue protein sequence, read N- to C-terminus: DNA-directed RNA polymerase subunit beta (1380 aa).

It belongs to the RNA polymerase beta chain family. In terms of assembly, the RNAP catalytic core consists of 2 alpha, 1 beta, 1 beta' and 1 omega subunit. When a sigma factor is associated with the core the holoenzyme is formed, which can initiate transcription.

It carries out the reaction RNA(n) + a ribonucleoside 5'-triphosphate = RNA(n+1) + diphosphate. Its function is as follows. DNA-dependent RNA polymerase catalyzes the transcription of DNA into RNA using the four ribonucleoside triphosphates as substrates. The sequence is that of DNA-directed RNA polymerase subunit beta from Rhizobium rhizogenes (strain K84 / ATCC BAA-868) (Agrobacterium radiobacter).